A 118-amino-acid polypeptide reads, in one-letter code: Beta-2-microglobulin (118 aa).

The N-terminal stretch at 1-20 (MAPLVALVLLGLLSLSGLDA) is a signal peptide. Positions 25–112 (PKVQVYSRHP…HVTLDKPKIV (88 aa)) constitute an Ig-like C1-type domain. Residues Cys45 and Cys99 are joined by a disulfide bond.

It belongs to the beta-2-microglobulin family. In terms of assembly, heterodimer of an alpha chain and a beta chain. Beta-2-microglobulin is the beta-chain of major histocompatibility complex class I molecules.

It localises to the secreted. In terms of biological role, component of the class I major histocompatibility complex (MHC). Involved in the presentation of peptide antigens to the immune system. The polypeptide is Beta-2-microglobulin (B2M) (Sus scrofa (Pig)).